A 76-amino-acid polypeptide reads, in one-letter code: Small ribosomal subunit protein bS18 (76 aa).

Belongs to the bacterial ribosomal protein bS18 family. As to quaternary structure, part of the 30S ribosomal subunit. Forms a tight heterodimer with protein bS6.

Binds as a heterodimer with protein bS6 to the central domain of the 16S rRNA, where it helps stabilize the platform of the 30S subunit. This is Small ribosomal subunit protein bS18 from Desulfitobacterium hafniense (strain Y51).